An 871-amino-acid chain; its full sequence is Probable LRR receptor-like serine/threonine-protein kinase At1g51810 (871 aa).

Positions 1–20 (MERHCLFFVIFSLILHLVQA) are cleaved as a signal peptide. Residues 21-512 (QDPIGFINLD…GRQIKSMTIP (492 aa)) lie on the Extracellular side of the membrane. Asparagine 93, asparagine 179, asparagine 229, asparagine 283, asparagine 295, asparagine 396, asparagine 410, asparagine 439, asparagine 458, asparagine 463, and asparagine 489 each carry an N-linked (GlcNAc...) asparagine glycan. LRR repeat units follow at residues 405-426 (IITS…TIQN), 429-449 (NLQE…EFLA), and 453-474 (SLLV…KLIE). A helical membrane pass occupies residues 513–533 (IVASIGSVVAFTVALMIFCVV). Over 534 to 871 (RKNNPSNDEA…FGTEVAPMAR (338 aa)) the chain is Cytoplasmic. Threonine 568 carries the post-translational modification Phosphothreonine. A Protein kinase domain is found at 577-850 (NNFQKILGKG…QVVFELKECL (274 aa)). ATP-binding positions include 583–591 (LGKGGFGIV) and lysine 605. Tyrosine 650 is subject to Phosphotyrosine. Aspartate 702 functions as the Proton acceptor in the catalytic mechanism. A Phosphoserine modification is found at serine 736. Threonine 737 and threonine 742 each carry phosphothreonine. The residue at position 750 (tyrosine 750) is a Phosphotyrosine.

This sequence belongs to the protein kinase superfamily. Ser/Thr protein kinase family.

The protein localises to the membrane. It catalyses the reaction L-seryl-[protein] + ATP = O-phospho-L-seryl-[protein] + ADP + H(+). The catalysed reaction is L-threonyl-[protein] + ATP = O-phospho-L-threonyl-[protein] + ADP + H(+). The sequence is that of Probable LRR receptor-like serine/threonine-protein kinase At1g51810 from Arabidopsis thaliana (Mouse-ear cress).